The sequence spans 366 residues: tRNA/tmRNA (uracil-C(5))-methyltransferase (366 aa).

Residues glutamine 187, tyrosine 215, asparagine 220, glutamate 236, and aspartate 297 each coordinate S-adenosyl-L-methionine. The Nucleophile role is filled by cysteine 322. The Proton acceptor role is filled by glutamate 356.

This sequence belongs to the class I-like SAM-binding methyltransferase superfamily. RNA M5U methyltransferase family. TrmA subfamily.

The catalysed reaction is uridine(54) in tRNA + S-adenosyl-L-methionine = 5-methyluridine(54) in tRNA + S-adenosyl-L-homocysteine + H(+). It catalyses the reaction uridine(341) in tmRNA + S-adenosyl-L-methionine = 5-methyluridine(341) in tmRNA + S-adenosyl-L-homocysteine + H(+). Its function is as follows. Dual-specificity methyltransferase that catalyzes the formation of 5-methyluridine at position 54 (m5U54) in all tRNAs, and that of position 341 (m5U341) in tmRNA (transfer-mRNA). The sequence is that of tRNA/tmRNA (uracil-C(5))-methyltransferase from Marinomonas sp. (strain MWYL1).